We begin with the raw amino-acid sequence, 225 residues long: Octanoyltransferase (225 aa).

Residues 37 to 217 (SDTPDEFWVV…ELASLIGYQT (181 aa)) enclose the BPL/LPL catalytic domain. Residues 76–83 (RGGQVTYH), 148–150 (SLG), and 161–163 (GLA) each bind substrate. Cys179 acts as the Acyl-thioester intermediate in catalysis.

The protein belongs to the LipB family.

It localises to the cytoplasm. The catalysed reaction is octanoyl-[ACP] + L-lysyl-[protein] = N(6)-octanoyl-L-lysyl-[protein] + holo-[ACP] + H(+). Its pathway is protein modification; protein lipoylation via endogenous pathway; protein N(6)-(lipoyl)lysine from octanoyl-[acyl-carrier-protein]: step 1/2. Its function is as follows. Catalyzes the transfer of endogenously produced octanoic acid from octanoyl-acyl-carrier-protein onto the lipoyl domains of lipoate-dependent enzymes. Lipoyl-ACP can also act as a substrate although octanoyl-ACP is likely to be the physiological substrate. The sequence is that of Octanoyltransferase from Aeromonas salmonicida (strain A449).